A 125-amino-acid chain; its full sequence is Cytochrome c' (125 aa).

Positions 10, 67, 116, 119, and 120 each coordinate heme c.

As to quaternary structure, homodimer. In terms of processing, binds 1 heme c group covalently per subunit.

Functionally, cytochrome c' is the most widely occurring bacterial c-type cytochrome. Cytochromes c' are high-spin proteins and the heme has no sixth ligand. Their exact function is not known. The protein is Cytochrome c' of Pararhodospirillum photometricum (Rhodospirillum photometricum).